A 95-amino-acid chain; its full sequence is MSVDAATVRRIAHLARIAVTEDEVPHLQGELNAMLAFVEQLSEVDVDGVEPMTSVTPMQMKKRADVVNDGEIADQVVANAPSTEDHFFLVPKVVE.

It belongs to the GatC family. Heterotrimer of A, B and C subunits.

It carries out the reaction L-glutamyl-tRNA(Gln) + L-glutamine + ATP + H2O = L-glutaminyl-tRNA(Gln) + L-glutamate + ADP + phosphate + H(+). The enzyme catalyses L-aspartyl-tRNA(Asn) + L-glutamine + ATP + H2O = L-asparaginyl-tRNA(Asn) + L-glutamate + ADP + phosphate + 2 H(+). In terms of biological role, allows the formation of correctly charged Asn-tRNA(Asn) or Gln-tRNA(Gln) through the transamidation of misacylated Asp-tRNA(Asn) or Glu-tRNA(Gln) in organisms which lack either or both of asparaginyl-tRNA or glutaminyl-tRNA synthetases. The reaction takes place in the presence of glutamine and ATP through an activated phospho-Asp-tRNA(Asn) or phospho-Glu-tRNA(Gln). This is Aspartyl/glutamyl-tRNA(Asn/Gln) amidotransferase subunit C from Rhodopseudomonas palustris (strain TIE-1).